Here is a 248-residue protein sequence, read N- to C-terminus: tRNA (guanine-N(1)-)-methyltransferase (248 aa).

S-adenosyl-L-methionine-binding positions include glycine 113 and 133-138 (VGDYVL).

Belongs to the RNA methyltransferase TrmD family. In terms of assembly, homodimer.

The protein localises to the cytoplasm. The catalysed reaction is guanosine(37) in tRNA + S-adenosyl-L-methionine = N(1)-methylguanosine(37) in tRNA + S-adenosyl-L-homocysteine + H(+). Functionally, specifically methylates guanosine-37 in various tRNAs. In Shewanella sp. (strain ANA-3), this protein is tRNA (guanine-N(1)-)-methyltransferase.